The chain runs to 381 residues: Creatine kinase M-type (381 aa).

Positions 11 to 98 (KLNYKPQEEY…FDPIIQDRHG (88 aa)) constitute a Phosphagen kinase N-terminal domain. The 243-residue stretch at 125–367 (YVLSSRVRTG…KLMVEMEKKL (243 aa)) folds into the Phosphagen kinase C-terminal domain. 128 to 132 (SSRVR) is a binding site for ATP. Phosphoserine is present on S164. Residue T166 is modified to Phosphothreonine. At S178 the chain carries Phosphoserine. Phosphothreonine is present on T180. Position 191 (H191) interacts with ATP. The residue at position 199 (S199) is a Phosphoserine. ATP contacts are provided by R236 and R292. Residues T313 and T322 each carry the phosphothreonine modification. Residues 320 to 325 (RGTGGV) and D335 contribute to the ATP site. S372 bears the Phosphoserine mark.

It belongs to the ATP:guanido phosphotransferase family. Dimer of identical or non-identical chains, which can be either B (brain type) or M (muscle type). With MM being the major form in skeletal muscle and myocardium, MB existing in myocardium, and BB existing in many tissues, especially brain.

The protein resides in the cytoplasm. It catalyses the reaction creatine + ATP = N-phosphocreatine + ADP + H(+). In terms of biological role, reversibly catalyzes the transfer of phosphate between ATP and various phosphogens (e.g. creatine phosphate). Creatine kinase isoenzymes play a central role in energy transduction in tissues with large, fluctuating energy demands, such as skeletal muscle, heart, brain and spermatozoa. The polypeptide is Creatine kinase M-type (Ckm) (Mus musculus (Mouse)).